A 420-amino-acid chain; its full sequence is Probable 3-isopropylmalate dehydratase large subunit (420 aa).

[4Fe-4S] cluster is bound by residues C301, C361, and C364.

This sequence belongs to the aconitase/IPM isomerase family. LeuC type 2 subfamily. Heterodimer of LeuC and LeuD. It depends on [4Fe-4S] cluster as a cofactor.

The catalysed reaction is (2R,3S)-3-isopropylmalate = (2S)-2-isopropylmalate. It functions in the pathway amino-acid biosynthesis; L-leucine biosynthesis; L-leucine from 3-methyl-2-oxobutanoate: step 2/4. Its function is as follows. Catalyzes the isomerization between 2-isopropylmalate and 3-isopropylmalate, via the formation of 2-isopropylmaleate. The protein is Probable 3-isopropylmalate dehydratase large subunit of Methanosarcina mazei (strain ATCC BAA-159 / DSM 3647 / Goe1 / Go1 / JCM 11833 / OCM 88) (Methanosarcina frisia).